The sequence spans 78 residues: Surfactant-associated protein 2 (78 aa).

Positions 1 to 19 (MGAGLPLVLLLTLVGSSQG) are cleaved as a signal peptide. The N-linked (GlcNAc...) asparagine glycan is linked to N37.

In terms of processing, N-glycosylated.

It is found in the secreted. The protein localises to the cytoplasmic vesicle. It localises to the secretory vesicle. Its subcellular location is the golgi apparatus. In terms of biological role, putative surfactant protein. The protein is Surfactant-associated protein 2 (SFTA2) of Bos taurus (Bovine).